Consider the following 134-residue polypeptide: UPF0412 protein YaaI (134 aa).

The signal sequence occupies residues 1–23 (MRSVLTISASLLFGLALSSVAHA).

It belongs to the UPF0412 family.

The chain is UPF0412 protein YaaI from Salmonella choleraesuis (strain SC-B67).